The sequence spans 125 residues: Oxytocin-neurophysin 1 (125 aa).

Residues methionine 1–alanine 19 form the signal peptide. Cysteines 20 and 25 form a disulfide. Glycine 28 carries the glycine amide modification. Cystine bridges form between cysteine 41/cysteine 85, cysteine 44/cysteine 58, cysteine 52/cysteine 75, cysteine 59/cysteine 65, cysteine 92/cysteine 104, cysteine 98/cysteine 116, and cysteine 105/cysteine 110.

It belongs to the vasopressin/oxytocin family. Interacts with oxytocin receptor (Ki=1.5 nM). Interacts with vasopressin V1aR/AVPR1A (Ki=37 nM), V1bR/AVPR1B (Ki=222 nM), and V2R/AVPR2 receptors (Ki=823 nM).

Neurophysin 1 specifically binds oxytocin. Its function is as follows. Oxytocin causes contraction of the smooth muscle of the uterus and of the mammary gland. Acts by binding to oxytocin receptor (OXTR). In Sus scrofa (Pig), this protein is Oxytocin-neurophysin 1 (OXT).